Reading from the N-terminus, the 243-residue chain is Ornithine decarboxylase antizyme 3 (243 aa).

Residues Ser6, Ser9, and Ser12 each carry the phosphoserine modification.

Belongs to the ODC antizyme family. As to quaternary structure, interacts with ODC1 and thereby sterically blocks ODC homodimerization. Interacts with AZIN2; this interaction disrupts the interaction between the antizyme and ODC1. Interacts with GGN. Isoform 2 interacts with PPP1R16A; Modulates PPP1CB activity. In terms of tissue distribution, testis-specific. Isoform 2 is expressed in outer dense fibers, fibrous sheath and the connecting piece of sperm.

It localises to the nucleus. The protein localises to the cytoplasm. Its subcellular location is the cell projection. The protein resides in the cilium. It is found in the flagellum. Ornithine decarboxylase (ODC) antizyme protein that negatively regulates ODC activity and intracellular polyamine biosynthesis and uptake in response to increased intracellular polyamine levels. Binds to ODC monomers, inhibiting the assembly of the functional ODC homodimers. Does not target the ODC monomers for degradation, which allows a protein synthesis-independent restoration of ODC activity. Stabilizes AZIN2 by interfering with its ubiquitination. Involved in the translocation of AZNI2 from ER-Golgi intermediate compartment (ERGIC) to the cytosol. Probably plays a key role in spermatogenesis by regulating the intracellular concentration of polyamines in haploid germ cells. Its function is as follows. Does not possess antizyme activity. Modulates PPP1CB activity through its interaction with PPP1R16A. The sequence is that of Ornithine decarboxylase antizyme 3 from Rattus norvegicus (Rat).